The sequence spans 185 residues: Signal peptidase I P (185 aa).

Residues 1 to 14 (MFDKEKRKKSNIID) lie on the Cytoplasmic side of the membrane. Residues 15–34 (WIKAILIALILVFLVRTFLF) traverse the membrane as a helical segment. Residues 35–185 (EPYIVQGESM…FPLDRIRHAK (151 aa)) are Extracellular-facing. Catalysis depends on residues Ser-43 and Lys-85.

Belongs to the peptidase S26 family.

It localises to the cell membrane. The enzyme catalyses Cleavage of hydrophobic, N-terminal signal or leader sequences from secreted and periplasmic proteins.. This is Signal peptidase I P (sipP) from Bacillus subtilis subsp. natto.